Reading from the N-terminus, the 413-residue chain is Arginine biosynthesis bifunctional protein ArgJ (413 aa).

Residues T160, K186, T197, E284, N408, and S413 each coordinate substrate. The Nucleophile role is filled by T197.

The protein belongs to the ArgJ family. As to quaternary structure, heterotetramer of two alpha and two beta chains.

The protein resides in the cytoplasm. It carries out the reaction N(2)-acetyl-L-ornithine + L-glutamate = N-acetyl-L-glutamate + L-ornithine. It catalyses the reaction L-glutamate + acetyl-CoA = N-acetyl-L-glutamate + CoA + H(+). Its pathway is amino-acid biosynthesis; L-arginine biosynthesis; L-ornithine and N-acetyl-L-glutamate from L-glutamate and N(2)-acetyl-L-ornithine (cyclic): step 1/1. It functions in the pathway amino-acid biosynthesis; L-arginine biosynthesis; N(2)-acetyl-L-ornithine from L-glutamate: step 1/4. In terms of biological role, catalyzes two activities which are involved in the cyclic version of arginine biosynthesis: the synthesis of N-acetylglutamate from glutamate and acetyl-CoA as the acetyl donor, and of ornithine by transacetylation between N(2)-acetylornithine and glutamate. This is Arginine biosynthesis bifunctional protein ArgJ from Burkholderia pseudomallei (strain 1710b).